The following is an 896-amino-acid chain: Alanine--tRNA ligase (896 aa).

Zn(2+) contacts are provided by H580, H584, C683, and H687.

Belongs to the class-II aminoacyl-tRNA synthetase family. Zn(2+) serves as cofactor.

The protein resides in the cytoplasm. The enzyme catalyses tRNA(Ala) + L-alanine + ATP = L-alanyl-tRNA(Ala) + AMP + diphosphate. In terms of biological role, catalyzes the attachment of alanine to tRNA(Ala) in a two-step reaction: alanine is first activated by ATP to form Ala-AMP and then transferred to the acceptor end of tRNA(Ala). Also edits incorrectly charged Ser-tRNA(Ala) and Gly-tRNA(Ala) via its editing domain. The chain is Alanine--tRNA ligase from Mycolicibacterium smegmatis (strain ATCC 700084 / mc(2)155) (Mycobacterium smegmatis).